A 2023-amino-acid polypeptide reads, in one-letter code: Protein Daple (2023 aa).

The Calponin-homology (CH) domain occupies 11-131 (NFMDSPLVVW…RMLLLILGCA (121 aa)). 3 coiled-coil regions span residues 250-415 (RQHL…LLEE), 458-1064 (NESA…VEKN), and 1105-1419 (LKQI…QYKF). The disordered stretch occupies residues 1013–1035 (RHEEEAAHSEISQQTLGQTRSLP). Over residues 1022-1033 (EISQQTLGQTRS) the composition is skewed to polar residues. Disordered stretches follow at residues 1441 to 1824 (KPKK…GSAS) and 1837 to 2023 (LRSN…YGCV). The segment covering 1442–1460 (PKKESSRERPDAPRERIRS) has biased composition (basic and acidic residues). Positions 1478–1491 (SAPPPPPPPLPPRQ) are enriched in pro residues. 2 stretches are compositionally biased toward polar residues: residues 1497-1518 (DSMNSQSVEENHVQSPTLSSPA) and 1564-1585 (TCSTPLSRNSHNAPGFTSSSSL). Low complexity-rich tracts occupy residues 1623 to 1643 (SAEFSRNTSSSNSPVSSKGSL) and 1667 to 1704 (RLSQSSLLPRSSTLPCDSPSASRPSQRPASRRPSSPGS). The GBA signature appears at 1700 to 1728 (SSPGSEMVTLEEFLQESNALSPPTVQTGS). Polar residues-rich tracts occupy residues 1714–1727 (QESNALSPPTVQTG), 1752–1763 (TPTNYVTPTVKT), 1785–1799 (LTDTSTPPSHSQTLP), and 1809–1824 (ALQQSSPRGSVGGSAS). Positions 1890-1904 (VDPRRLSLAQPRDEF) are enriched in basic and acidic residues. Over residues 1927-1945 (GSGSSRAGAARSGSAQPRG) the composition is skewed to low complexity. Residues 1974-1988 (QEQREAESPLLKKAD) show a composition bias toward basic and acidic residues. The segment covering 1989–2014 (TTNLSYASKEQPTSKPASPDPNNDPQ) has biased composition (polar residues). Positions 2020–2023 (YGCV) match the PDZ-binding motif.

The protein belongs to the CCDC88 family.

It is found in the cytoplasm. It localises to the cell junction. Positive regulator of Wnt signaling, acting synergistically with dvl2. Functions upstream of ctnnb1/beta-catenin in the canonical Wnt pathway, and also activates jnk in the Wnt/planar cell polarity (PCP) pathway. Acts as a non-receptor guanine nucleotide exchange factor which binds to and activates guanine nucleotide-binding protein G(i) alpha (Gi-alpha) subunits. This promotes apical cell constriction and subsequent bending of the neural plate during neurulation via arhgef18. This Danio rerio (Zebrafish) protein is Protein Daple.